Reading from the N-terminus, the 154-residue chain is Avirulence protein ATR13 (154 aa).

The signal sequence occupies residues 1 to 19; that stretch reads MRLVHAVLLPGIIVFVSNG. The short motif at 38 to 41 is the RxLR element; sequence RQLR. Positions 50 to 92 are leucine heptad repeat region; sequence LSRASFGLGKAQDPLDKFFSKIIFSGKPIETSYSAKGIHEKII. A single repeat region region spans residues 93-103; it reads EAHDLHVSKSK. The tract at residues 104–154 is highly variable C-terminus domain; sequence NAPIQYASVMEYLKKTYPGPDIERIVSTLERHDEVGAKDLGAKLRDALDRQ.

Belongs to the RxLR effector family.

It localises to the secreted. The protein localises to the host cytoplasm. In terms of biological role, secreted effector that acts as an elicitor of hypersensitive response (HR) specifically on plants carrying defense protein RPP13. Recognition of ATR13 by RPP13 initiates defense responses that are effective against oomycete, bacterial and viral pathogens. The allele ATR13-Emco5 recognizes RPP13-Nd, the RPP13 defense protein from Arabidopsis thaliana ecotype Niederzenz. The polypeptide is Avirulence protein ATR13 (Hyaloperonospora arabidopsidis (Peronospora arabidopsidis)).